The chain runs to 134 residues: Profilin-4 (134 aa).

Belongs to the profilin family. As to quaternary structure, occurs in many kinds of cells as a complex with monomeric actin in a 1:1 ratio. In terms of tissue distribution, specifically expressed in mature and germinating pollen grains, and growing pollen tubes (at protein level).

The protein localises to the cytoplasm. Its subcellular location is the cytoskeleton. In terms of biological role, binds to actin monomers and regulates the organization of the actin cytoskeleton. At high concentrations, profilin prevents the polymerization of actin, whereas it enhances it at low concentrations. At low concentrations, associates with the poly-proline motif of formins to enhance actin filament elongation rate. Acts redundantly with PRF5 to regulate apical actin polymerization at the tip of pollen tube and control polarized pollen tube growth. Functions probably by favoring formin-mediated actin polymerization at pollen tube tips. This is Profilin-4 from Arabidopsis thaliana (Mouse-ear cress).